Consider the following 44-residue polypeptide: uncharacterized protein (44 aa).

This is an uncharacterized protein from Haemophilus influenzae (strain ATCC 51907 / DSM 11121 / KW20 / Rd).